The sequence spans 340 residues: MRFHGDMLLTTPVISSLKKNYPDAKIDVLLYQDTIPILSENPEINALYGIKNKKAKASEKIANFFHLIKVLRANKYDLIVNLTDQWMVAILVRLLNARVKISQDYHHRQSAFWRKSFTHLVPLQGGNVVESNLSVLTPLGVDSLVKQTTMSYPPASWKRMRRELDHAGVGQNYVVIQPTARQIFKCWDNAKFSAVIDALHARGYEVVLTSGPDKDDLACVNEIAQGCQTPPVTALAGKVTFPELGALIDHAQLFIGVDSAPAHIAAAVNTPLISLFGATDHIFWRPWSNNMIQFWAGDYREMPTRDQRDRNEMYLSVIPAADVIAAVDKLLPSSTTGTSL.

This sequence belongs to the glycosyltransferase 9 family.

The catalysed reaction is an L-alpha-D-Hep-(1-&gt;3)-4-O-phospho-L-alpha-D-Hep-(1-&gt;5)-[alpha-Kdo-(2-&gt;4)]-alpha-Kdo-(2-&gt;6)-lipid A + ADP-L-glycero-beta-D-manno-heptose = an L-alpha-D-Hep-(1-&gt;7)-L-alpha-D-Hep-(1-&gt;3)-4-O-phospho-L-alpha-D-Hep-(1-&gt;5)-[alpha-Kdo-(2-&gt;4)]-alpha-Kdo-(2-&gt;6)-lipid A + ADP + H(+). It catalyses the reaction L-alpha-D-Hep-(1-&gt;3)-4-O-phospho-L-alpha-D-Hep-(1-&gt;5)-[alpha-Kdo-(2-&gt;4)]-alpha-Kdo-(2-&gt;6)-lipid A (E. coli) + ADP-L-glycero-beta-D-manno-heptose = L-alpha-D-Hep-(1-&gt;7)-L-alpha-D-Hep-(1-&gt;3)-4-O-phospho-L-alpha-D-Hep-(1-&gt;5)-[alpha-Kdo-(2-&gt;4)]-alpha-Kdo-(2-&gt;6)-lipid A (E. coli) + ADP + H(+). The protein operates within bacterial outer membrane biogenesis; LPS core biosynthesis. Glycosyltransferase involved in the biosynthesis of the core oligosaccharide region of lipopolysaccharide (LPS). Catalyzes the addition of the third heptose unit (HepIII) to the second heptose unit (HepII) of the phospho-Hep2-Kdo2-lipid A module. The transfer of HepIII seems to be a prerequisite to the phosphorylation of the second heptose unit. This Escherichia coli protein is Lipopolysaccharide heptosyltransferase 3.